Reading from the N-terminus, the 1385-residue chain is DNA-directed RNA polymerase subunit beta' (1385 aa).

4 residues coordinate Zn(2+): cysteine 75, cysteine 77, cysteine 90, and cysteine 93. Mg(2+) is bound by residues aspartate 466, aspartate 468, and aspartate 470. Residues cysteine 809, cysteine 883, cysteine 890, and cysteine 893 each contribute to the Zn(2+) site.

This sequence belongs to the RNA polymerase beta' chain family. As to quaternary structure, the RNAP catalytic core consists of 2 alpha, 1 beta, 1 beta' and 1 omega subunit. When a sigma factor is associated with the core the holoenzyme is formed, which can initiate transcription. Mg(2+) is required as a cofactor. Requires Zn(2+) as cofactor.

The catalysed reaction is RNA(n) + a ribonucleoside 5'-triphosphate = RNA(n+1) + diphosphate. In terms of biological role, DNA-dependent RNA polymerase catalyzes the transcription of DNA into RNA using the four ribonucleoside triphosphates as substrates. The polypeptide is DNA-directed RNA polymerase subunit beta' (Nitratidesulfovibrio vulgaris (strain ATCC 29579 / DSM 644 / CCUG 34227 / NCIMB 8303 / VKM B-1760 / Hildenborough) (Desulfovibrio vulgaris)).